A 188-amino-acid polypeptide reads, in one-letter code: Elongation factor P (188 aa).

Lys-34 carries the post-translational modification N6-(3,6-diaminohexanoyl)-5-hydroxylysine.

This sequence belongs to the elongation factor P family. Post-translationally, may be beta-lysylated on the epsilon-amino group of Lys-34 by the combined action of EpmA and EpmB, and then hydroxylated on the C5 position of the same residue by EpmC (if this protein is present). Lysylation is critical for the stimulatory effect of EF-P on peptide-bond formation. The lysylation moiety may extend toward the peptidyltransferase center and stabilize the terminal 3-CCA end of the tRNA. Hydroxylation of the C5 position on Lys-34 may allow additional potential stabilizing hydrogen-bond interactions with the P-tRNA.

It is found in the cytoplasm. It participates in protein biosynthesis; polypeptide chain elongation. Its function is as follows. Involved in peptide bond synthesis. Alleviates ribosome stalling that occurs when 3 or more consecutive Pro residues or the sequence PPG is present in a protein, possibly by augmenting the peptidyl transferase activity of the ribosome. Modification of Lys-34 is required for alleviation. This chain is Elongation factor P, found in Actinobacillus succinogenes (strain ATCC 55618 / DSM 22257 / CCUG 43843 / 130Z).